The sequence spans 353 residues: Photosystem II D2 protein (353 aa).

At Thr2 the chain carries N-acetylthreonine. At Thr2 the chain carries Phosphothreonine. Residues Cys41 to Thr61 traverse the membrane as a helical segment. Residue His118 coordinates chlorophyll a. The helical transmembrane segment at Gly125–Pro141 threads the bilayer. Residues Gln130 and Asn143 each coordinate pheophytin a. The chain crosses the membrane as a helical span at residues Val153–Ser166. His198 provides a ligand contact to chlorophyll a. Residues Ala208–Asp228 form a helical membrane-spanning segment. 2 residues coordinate a plastoquinone: His215 and Phe262. Residue His215 coordinates Fe cation. His269 contributes to the Fe cation binding site. Residues Gly279–Arg295 form a helical membrane-spanning segment.

The protein belongs to the reaction center PufL/M/PsbA/D family. PSII is composed of 1 copy each of membrane proteins PsbA, PsbB, PsbC, PsbD, PsbE, PsbF, PsbH, PsbI, PsbJ, PsbK, PsbL, PsbM, PsbT, PsbX, PsbY, PsbZ, Psb30/Ycf12, at least 3 peripheral proteins of the oxygen-evolving complex and a large number of cofactors. It forms dimeric complexes. Requires The D1/D2 heterodimer binds P680, chlorophylls that are the primary electron donor of PSII, and subsequent electron acceptors. It shares a non-heme iron and each subunit binds pheophytin, quinone, additional chlorophylls, carotenoids and lipids. There is also a Cl(-1) ion associated with D1 and D2, which is required for oxygen evolution. The PSII complex binds additional chlorophylls, carotenoids and specific lipids. as cofactor.

The protein resides in the plastid. It is found in the chloroplast thylakoid membrane. It catalyses the reaction 2 a plastoquinone + 4 hnu + 2 H2O = 2 a plastoquinol + O2. In terms of biological role, photosystem II (PSII) is a light-driven water:plastoquinone oxidoreductase that uses light energy to abstract electrons from H(2)O, generating O(2) and a proton gradient subsequently used for ATP formation. It consists of a core antenna complex that captures photons, and an electron transfer chain that converts photonic excitation into a charge separation. The D1/D2 (PsbA/PsbD) reaction center heterodimer binds P680, the primary electron donor of PSII as well as several subsequent electron acceptors. D2 is needed for assembly of a stable PSII complex. The protein is Photosystem II D2 protein of Nymphaea alba (White water-lily).